Here is a 240-residue protein sequence, read N- to C-terminus: Methylthioribulose-1-phosphate dehydratase (240 aa).

C99 provides a ligand contact to substrate. Residues H116 and H118 each coordinate Zn(2+). Residue E145 is the Proton donor/acceptor of the active site. H201 is a binding site for Zn(2+).

Belongs to the aldolase class II family. MtnB subfamily. Zn(2+) serves as cofactor.

It is found in the cytoplasm. It carries out the reaction 5-(methylsulfanyl)-D-ribulose 1-phosphate = 5-methylsulfanyl-2,3-dioxopentyl phosphate + H2O. The protein operates within amino-acid biosynthesis; L-methionine biosynthesis via salvage pathway; L-methionine from S-methyl-5-thio-alpha-D-ribose 1-phosphate: step 2/6. Functionally, catalyzes the dehydration of methylthioribulose-1-phosphate (MTRu-1-P) into 2,3-diketo-5-methylthiopentyl-1-phosphate (DK-MTP-1-P). This chain is Methylthioribulose-1-phosphate dehydratase, found in Ajellomyces capsulatus (strain H143) (Darling's disease fungus).